The sequence spans 942 residues: Zinc finger protein 865 (942 aa).

The segment at 66–106 is disordered; it reads FASTSTSKPKEFKVEAPPSSSLSPSKKPDIATTQQFNNQPP. Over residues 96–106 the composition is skewed to polar residues; the sequence is ATTQQFNNQPP. 20 C2H2-type zinc fingers span residues 172–194, 200–222, 282–304, 310–332, 338–360, 367–389, 466–488, 494–516, 522–544, 564–586, 592–614, 678–700, 706–728, 734–756, 762–784, 790–812, 818–840, 846–868, 874–896, and 902–924; these read FPCT…MLVH, YECN…RRCH, FTCT…QIIH, FSCS…VKTH, VQCE…QATH, YKCE…KQVH, FCCN…ERIH, HQCS…HVVH, YKCE…KQIH, FGCT…KELH, YVCD…KLVH, FSCS…KYVH, LACN…RRTH, FTCS…QRCH, YRCT…KVVH, YKCA…QRLH, QRCP…QRVH, YRCD…QRSH, LRCS…VQTH, and FKCG…RHAH.

Belongs to the krueppel C2H2-type zinc-finger protein family.

The protein resides in the nucleus. In terms of biological role, may be involved in transcriptional regulation. This chain is Zinc finger protein 865 (znf865), found in Xenopus tropicalis (Western clawed frog).